Here is a 662-residue protein sequence, read N- to C-terminus: F-box/WD repeat-containing protein pof10 (662 aa).

Residues 1–16 show a composition bias toward polar residues; that stretch reads MKSEPTSLDFTSSNLR. The segment at 1 to 27 is disordered; that stretch reads MKSEPTSLDFTSSNLRRMNRDHSSNNT. Positions 28 to 74 constitute an F-box domain; sequence NRTVLNLPKEILIIIFSFLDPRSLLSAQCTCKYWKKLLSDDLSWRTA. WD repeat units lie at residues 215 to 260, 263 to 302, and 429 to 468; these read SHAD…SLQS, FRSSQILSLCFRPKYKMLLVDTFNYELNSYQLYLIPGYAR, and TAYSNFPITDIYLNEVAMVVGSASGYCGVYDTVTGNFLKK. In terms of domain architecture, UIM 1 spans 581 to 600; sequence SEEEIIAYVTMLSQEEEAKR. Positions 617-645 are disordered; that stretch reads ENDEQATSSLNALSSNHEPPQEQANVAEL. Positions 621–640 are enriched in polar residues; sequence QATSSLNALSSNHEPPQEQA. The 17-residue stretch at 646–662 folds into the UIM 2 domain; that stretch reads NEQEQIELAMRLSLMEM.

As to quaternary structure, part of a SCF (SKP1-cullin-F-box) protein ligase complex. Interacts with skp1.

It localises to the cytoplasm. Its function is as follows. Probably recognizes and binds to some phosphorylated proteins and promotes their ubiquitination and degradation. The chain is F-box/WD repeat-containing protein pof10 (pof10) from Schizosaccharomyces pombe (strain 972 / ATCC 24843) (Fission yeast).